A 115-amino-acid polypeptide reads, in one-letter code: T-cell receptor gamma chain V region V108B (115 aa).

An N-terminal signal peptide occupies residues 1 to 18 (MLLLRWPTFCCLWVFGLG). The v segment stretch occupies residues 19 to 115 (QLEQTELSVT…EATYYCAVWI (97 aa)).

The polypeptide is T-cell receptor gamma chain V region V108B (Tcrg-V1) (Mus musculus (Mouse)).